Consider the following 380-residue polypeptide: Ribosomal RNA large subunit methyltransferase F (380 aa).

A disordered region spans residues 1–32; that stretch reads MSHKTKPSTQERKAGKPSAPKRKVISKSPNSK.

This sequence belongs to the methyltransferase superfamily. METTL16/RlmF family.

It is found in the cytoplasm. It carries out the reaction adenosine(1618) in 23S rRNA + S-adenosyl-L-methionine = N(6)-methyladenosine(1618) in 23S rRNA + S-adenosyl-L-homocysteine + H(+). Its function is as follows. Specifically methylates the adenine in position 1618 of 23S rRNA. The polypeptide is Ribosomal RNA large subunit methyltransferase F (Shewanella halifaxensis (strain HAW-EB4)).